We begin with the raw amino-acid sequence, 784 residues long: Phosphate transporter PHO1 homolog 1 (784 aa).

The Cytoplasmic segment spans residues 1–387 (MVKFTKQFEG…HHRKESHSVT (387 aa)). An SPX domain is found at 2-335 (VKFTKQFEGQ…GKQILPIYLK (334 aa)). Residues 388–408 (FFIGLFTGCFVALLAGYIIVA) form a helical membrane-spanning segment. Residues 409–429 (HLTGMYRQHSANTFYMETAYP) lie on the Extracellular side of the membrane. The chain crosses the membrane as a helical span at residues 430-450 (VLSMFGLLFLHLFLYGCNIFM). At 451-474 (WRKARINYSFIFELGSKNELKYRD) the chain is on the cytoplasmic side. A helical transmembrane segment spans residues 475 to 495 (VFLICTASMSAIAGVMFVHLS). Over 496 to 507 (LLEKGYSFRQVQ) the chain is Extracellular. Residues 508-528 (VIPGLLLLGFLLILICPLNIF) traverse the membrane as a helical segment. The Cytoplasmic segment spans residues 529-654 (YKSSRYRLIS…TKVAYEKERS (126 aa)). Residues 593–784 (MRVKYYRDLA…LPFREVDEED (192 aa)) enclose the EXS domain. The helical transmembrane segment at 655 to 675 (LGWLCLVVAMSSVATIYQLYW) threads the bilayer. Over 676–703 (DFVKDWGLLQHNSNNPWLRNQLMLRQKS) the chain is Extracellular. Residues 704–724 (IYYFSMVLNLVLRLAWLQTVL) form a helical membrane-spanning segment. At 725-784 (HSSFEHVDYRVTGLFLAALEVIRRGQWNFYRLENEHLNNAGKFRAVKTVPLPFREVDEED) the chain is on the cytoplasmic side.

The protein belongs to the SYG1 (TC 2.A.94) family. In terms of tissue distribution, expressed in vascular cylinder of roots, leaves, stems, petals, sepals and filaments. Expressed in receptacle, stigma apex and anther connective tissue.

The protein localises to the cell membrane. In terms of biological role, contributes to the loading of inorganic phosphate (Pi) into the root xylem vessels. In Arabidopsis thaliana (Mouse-ear cress), this protein is Phosphate transporter PHO1 homolog 1 (PHO1-H1).